We begin with the raw amino-acid sequence, 154 residues long: UPF0178 protein RC1_2062 (154 aa).

The protein belongs to the UPF0178 family.

This chain is UPF0178 protein RC1_2062, found in Rhodospirillum centenum (strain ATCC 51521 / SW).